A 427-amino-acid polypeptide reads, in one-letter code: Acetylornithine aminotransferase, mitochondrial (427 aa).

Residue lysine 279 is modified to N6-(pyridoxal phosphate)lysine.

The protein belongs to the class-III pyridoxal-phosphate-dependent aminotransferase family. Pyridoxal 5'-phosphate is required as a cofactor.

The protein resides in the mitochondrion matrix. It catalyses the reaction N(2)-acetyl-L-ornithine + 2-oxoglutarate = N-acetyl-L-glutamate 5-semialdehyde + L-glutamate. Its pathway is amino-acid biosynthesis; L-arginine biosynthesis; N(2)-acetyl-L-ornithine from L-glutamate: step 4/4. The sequence is that of Acetylornithine aminotransferase, mitochondrial (ARG8) from Candida glabrata (strain ATCC 2001 / BCRC 20586 / JCM 3761 / NBRC 0622 / NRRL Y-65 / CBS 138) (Yeast).